A 108-amino-acid chain; its full sequence is UPF0145 protein Tmel_1129 (108 aa).

It belongs to the UPF0145 family.

The protein is UPF0145 protein Tmel_1129 of Thermosipho melanesiensis (strain DSM 12029 / CIP 104789 / BI429).